We begin with the raw amino-acid sequence, 389 residues long: Succinate--CoA ligase [ADP-forming] subunit beta (389 aa).

The ATP-grasp domain occupies 9–236 (RDLFEKHGVP…KTTADPLEEK (228 aa)). ATP is bound by residues K45, 52 to 54 (GRG), A94, and E99. Positions 191 and 205 each coordinate Mg(2+). Substrate-binding positions include N256 and 318–320 (GIT).

This sequence belongs to the succinate/malate CoA ligase beta subunit family. Heterotetramer of two alpha and two beta subunits. It depends on Mg(2+) as a cofactor.

The enzyme catalyses succinate + ATP + CoA = succinyl-CoA + ADP + phosphate. The catalysed reaction is GTP + succinate + CoA = succinyl-CoA + GDP + phosphate. The protein operates within carbohydrate metabolism; tricarboxylic acid cycle; succinate from succinyl-CoA (ligase route): step 1/1. Succinyl-CoA synthetase functions in the citric acid cycle (TCA), coupling the hydrolysis of succinyl-CoA to the synthesis of either ATP or GTP and thus represents the only step of substrate-level phosphorylation in the TCA. The beta subunit provides nucleotide specificity of the enzyme and binds the substrate succinate, while the binding sites for coenzyme A and phosphate are found in the alpha subunit. This chain is Succinate--CoA ligase [ADP-forming] subunit beta, found in Kocuria rhizophila (strain ATCC 9341 / DSM 348 / NBRC 103217 / DC2201).